A 343-amino-acid polypeptide reads, in one-letter code: Fructose-1,6-bisphosphatase class 1 (343 aa).

Residues E90, D109, L111, and D112 each coordinate Mg(2+). Substrate-binding positions include 112 to 115 and N199; that span reads DGSS. Position 271 (E271) interacts with Mg(2+).

This sequence belongs to the FBPase class 1 family. In terms of assembly, homotetramer. Requires Mg(2+) as cofactor.

It is found in the cytoplasm. It catalyses the reaction beta-D-fructose 1,6-bisphosphate + H2O = beta-D-fructose 6-phosphate + phosphate. It participates in carbohydrate biosynthesis; Calvin cycle. This Rhodopseudomonas palustris (strain ATCC BAA-98 / CGA009) protein is Fructose-1,6-bisphosphatase class 1.